The sequence spans 476 residues: Aspartyl/glutamyl-tRNA(Asn/Gln) amidotransferase subunit B (476 aa).

This sequence belongs to the GatB/GatE family. GatB subfamily. Heterotrimer of A, B and C subunits.

The enzyme catalyses L-glutamyl-tRNA(Gln) + L-glutamine + ATP + H2O = L-glutaminyl-tRNA(Gln) + L-glutamate + ADP + phosphate + H(+). It carries out the reaction L-aspartyl-tRNA(Asn) + L-glutamine + ATP + H2O = L-asparaginyl-tRNA(Asn) + L-glutamate + ADP + phosphate + 2 H(+). Functionally, allows the formation of correctly charged Asn-tRNA(Asn) or Gln-tRNA(Gln) through the transamidation of misacylated Asp-tRNA(Asn) or Glu-tRNA(Gln) in organisms which lack either or both of asparaginyl-tRNA or glutaminyl-tRNA synthetases. The reaction takes place in the presence of glutamine and ATP through an activated phospho-Asp-tRNA(Asn) or phospho-Glu-tRNA(Gln). The sequence is that of Aspartyl/glutamyl-tRNA(Asn/Gln) amidotransferase subunit B from Vesicomyosocius okutanii subsp. Calyptogena okutanii (strain HA).